Reading from the N-terminus, the 514-residue chain is Probable WRKY transcription factor 4 (514 aa).

Disordered stretches follow at residues 1–28 (MSEK…PPRP), 175–204 (QPQT…PLPA), and 278–394 (YKGQ…TVTE). Polar residues-rich tracts occupy residues 185-198 (QVQS…QIPT) and 286-299 (PPQN…DNTA). A DNA-binding region (WRKY 1) is located at residues 223–287 (NVDKPADDGY…YKGQHNHEPP (65 aa)). Over residues 300-313 (NINGSSINNNRGSS) the composition is skewed to low complexity. Over residues 315–326 (LGASQFQTNSSN) the composition is skewed to polar residues. Basic and acidic residues predominate over residues 359–380 (TDVREKDENEPDPKRRSTEVRI). A DNA-binding region (WRKY 2) is located at residues 403–468 (SEVDLLDDGY…YEGKHNHDLP (66 aa)). Zn(2+) contacts are provided by C434, T436, C439, H463, and H465. Residues 464-514 (NHDLPAAKSSSHAAAAAQLRPDNRPGGLANLNQQQQQQPVARLRLKEEQTT) form a disordered region. Low complexity predominate over residues 469-480 (AAKSSSHAAAAA).

As to expression, in young, mature and senescent leaves.

Its subcellular location is the nucleus. Functionally, transcription factor that binds specifically to the W box (5'-(T)TGAC[CT]-3'), a frequently occurring elicitor-responsive cis-acting element. Has a positive role in resistance to necrotrophic pathogens (e.g. Botrytis cinerea), but a negative effect on plant resistance to biotrophic pathogens (e.g. Pseudomonas syringae). The polypeptide is Probable WRKY transcription factor 4 (WRKY4) (Arabidopsis thaliana (Mouse-ear cress)).